Reading from the N-terminus, the 283-residue chain is Putative cytochrome b-c1 complex subunit Rieske-like protein 1 (283 aa).

The chain crosses the membrane as a helical span at residues 116–149 (TEARKGFSYLVTGVTTVGVAYAAKNAVTQFVSSM). In terms of domain architecture, Rieske spans 196–281 (EAAVELSQLR…YEFTSDDMVI (86 aa)). [2Fe-2S] cluster-binding residues include Cys226, His228, Cys245, and His248. Cys231 and Cys247 are disulfide-bonded.

The protein belongs to the Rieske iron-sulfur protein family. [2Fe-2S] cluster is required as a cofactor.

Its subcellular location is the membrane. This chain is Putative cytochrome b-c1 complex subunit Rieske-like protein 1 (UQCRFS1P1), found in Homo sapiens (Human).